Here is a 469-residue protein sequence, read N- to C-terminus: UDP-N-acetylmuramate--L-alanine ligase (469 aa).

122 to 128 is a binding site for ATP; sequence GTHGKTT.

The protein belongs to the MurCDEF family.

It is found in the cytoplasm. It carries out the reaction UDP-N-acetyl-alpha-D-muramate + L-alanine + ATP = UDP-N-acetyl-alpha-D-muramoyl-L-alanine + ADP + phosphate + H(+). It functions in the pathway cell wall biogenesis; peptidoglycan biosynthesis. Its function is as follows. Cell wall formation. This chain is UDP-N-acetylmuramate--L-alanine ligase, found in Legionella pneumophila (strain Lens).